The sequence spans 179 residues: Serglycin (179 aa).

Residues 1-26 (MRQVPVGTRLVLALAFVLVWGSSVQG) form the signal peptide. The propeptide at 27-75 (YPARRARYQWVRCKPDGIFANCIEEKGPRFDLIAEESNVGPPMTDPVLM) is activation peptide. An intrachain disulfide couples Cys39 to Cys48. The interval 86–145 (SDDYSGSGSGSGSGSGSGSGSGSGSGSGSGSGSGSGSGSGSGSGSGSGSGSGSLADMEWE) is disordered. Residues Ser90 and Ser92 are each glycosylated (O-linked (Xyl...) (glycosaminoglycan) serine). A run of 24 repeats spans residues 90-91 (SG), 92-93 (SG), 94-95 (SG), 96-97 (SG), 98-99 (SG), 100-101 (SG), 102-103 (SG), 104-105 (SG), 106-107 (SG), 108-109 (SG), 110-111 (SG), 112-113 (SG), 114-115 (SG), 116-117 (SG), 118-119 (SG), 120-121 (SG), 122-123 (SG), 124-125 (SG), 126-127 (SG), 128-129 (SG), 130-131 (SG), 132-133 (SG), 134-135 (SG), and 136-137 (SG). A 24 X 2 AA tandem repeats of S-G region spans residues 90–137 (SGSGSGSGSGSGSGSGSGSGSGSGSGSGSGSGSGSGSGSGSGSGSGSG). Positions 92–136 (SGSGSGSGSGSGSGSGSGSGSGSGSGSGSGSGSGSGSGSGSGSGS) are enriched in gly residues. O-linked (Xyl...) (glycosaminoglycan) serine glycosylation is found at Ser96, Ser98, Ser100, Ser102, Ser104, and Ser106.

The protein belongs to the serglycin family. As to quaternary structure, binds to activated CD44 and to GZMB. In terms of processing, O-glycosylated; contains chondroitin sulfate and heparan sulfate.

Its subcellular location is the cytoplasmic granule. It localises to the cytolytic granule. The protein resides in the secreted. It is found in the extracellular space. The protein localises to the golgi apparatus. Its function is as follows. Plays a role in formation of mast cell secretory granules and mediates storage of various compounds in secretory vesicles. Required for storage of some proteases in both connective tissue and mucosal mast cells and for storage of granzyme B in T-lymphocytes. Plays a role in localizing neutrophil elastase in azurophil granules of neutrophils. Mediates processing of MMP2. Plays a role in cytotoxic cell granule-mediated apoptosis by forming a complex with granzyme B which is delivered to cells by perforin to induce apoptosis. Regulates the secretion of TNF-alpha and may also regulate protease secretion. Inhibits bone mineralization. This chain is Serglycin (Srgn), found in Rattus norvegicus (Rat).